Here is a 56-residue protein sequence, read N- to C-terminus: Potassium channel toxin alpha-KTx 9.8 (56 aa).

Positions 1-19 are cleaved as a signal peptide; the sequence is MSRLFTLVLIVLAMNVMMA. Residues 20 to 28 constitute a propeptide that is removed on maturation; that stretch reads IISDPVVEA. 3 disulfides stabilise this stretch: C31-C47, C34-C52, and C38-C54.

Belongs to the short scorpion toxin superfamily. Potassium channel inhibitor family. Alpha-KTx 09 subfamily. Expressed by the venom gland.

The protein localises to the secreted. Potassium channel inhibitor. The polypeptide is Potassium channel toxin alpha-KTx 9.8 (Buthus israelis (Israeli scorpion)).